Consider the following 492-residue polypeptide: Catalase isozyme B (492 aa).

A disordered region spans residues 1 to 20 (MDPYKHRPSSGSNSTFWTTN). Residues 9–20 (SSGSNSTFWTTN) show a composition bias toward polar residues. Residue Arg62 participates in heme binding. Residue His65 is part of the active site. A heme-binding site is contributed by Arg102. Asn138 is an active-site residue. Phe151 provides a ligand contact to heme. Position 210 is a phosphotyrosine (Tyr210). Positions 325-348 (CPAIIVPGIHYSDDKLLQTRIFSY) form a cross-link, 3-(S-cysteinyl)-tyrosine (Cys-Tyr). Heme is bound by residues Arg344, Tyr348, and Arg355. The short motif at 484 to 492 (SRLNLKPNM) is the Peroxisome targeting signal element.

Belongs to the catalase family. As to quaternary structure, homotetramer. Interacts with GLO1 and GLO4; these interactions are disturbed by alpha-hydroxy-2-pyridinemethanesulfonic acid (HPMS) and salicylic acid (SA). Interacts with STRK1 at the plasma membrane. Requires heme as cofactor. As to expression, predominantly expressed in roots and, at low levels, in leaves (e.g. sheaths). Detected in seeds. Also present in panicles and culms. Observed in stems and anthers.

Its subcellular location is the peroxisome. It is found in the glyoxysome. The protein localises to the cell membrane. It catalyses the reaction 2 H2O2 = O2 + 2 H2O. Strongly inhibited by beta-mercaptoethanol, sodium azide and potassium cyanide. Slightly repressed by 3-amino-1,2,4-triazole (3-AT). Activity is repressed proportionally to increased concentration of NaCl, KCl, LiCl and MgCl(2). In terms of biological role, occurs in almost all aerobically respiring organisms and serves to protect cells from the toxic effects of hydrogen peroxide. May prevent the excessive accumulation of H(2)O(2) during water stress in response to the accumulation of abscisic acid (ABA). Involved in the modulation of ROS levels related to root growth regulation. Required for pollen viability and floret fertility upon heat stress (HS) by detoxifying reactive oxygen species (ROS) and malondialdehyde (MDA) accumulation in developing anthers exposed to HS. The sequence is that of Catalase isozyme B (CATB) from Oryza sativa subsp. japonica (Rice).